A 487-amino-acid polypeptide reads, in one-letter code: Pentatricopeptide repeat-containing protein At5g61370, mitochondrial (487 aa).

Residues 1–90 (MMSTTVRLNR…TSPRRLLRFF (90 aa)) constitute a mitochondrion transit peptide. PPR repeat units lie at residues 137–171 (DKQT…SCPQ), 172–202 (DGFT…HKDV), 207–241 (ELSV…GITP), 242–283 (DLFC…KIQP), 284–318 (TSMS…GCDP), 319–353 (DTGS…GFRP), 354–388 (ERKF…SVGG), and 389–423 (YGQV…DVTL). Positions 466–487 (TKPKLKLKPKRRSKTKKKNLQH) are disordered.

This sequence belongs to the PPR family. P subfamily.

It is found in the mitochondrion. The chain is Pentatricopeptide repeat-containing protein At5g61370, mitochondrial from Arabidopsis thaliana (Mouse-ear cress).